A 261-amino-acid chain; its full sequence is Homeobox protein engrailed-2b (261 aa).

Basic and acidic residues-rich tracts occupy residues 1–21, 53–72, and 100–116; these read MEEN…DESN, GRRK…RENR, and KKTD…RAET. Disordered regions lie at residues 1–24, 53–125, and 152–176; these read MEEN…NRAI, GRRK…SSDS, and DRPS…KRPR. The homeobox DNA-binding region spans 172 to 231; it reads DKRPRTAFTAEQLQRLKNEFQNNRYLTEQRRQALAQELGLNESQIKIWFQNKRAKIKKAT.

Belongs to the engrailed homeobox family.

It localises to the nucleus. This Danio rerio (Zebrafish) protein is Homeobox protein engrailed-2b (eng2b).